The following is a 424-amino-acid chain: Tyrosine--tRNA ligase (424 aa).

L-tyrosine is bound at residue Tyr37. Residues 42 to 51 carry the 'HIGH' region motif; it reads PTADSLHLGH. Residues Tyr175 and Gln179 each contribute to the L-tyrosine site. The 'KMSKS' region signature appears at 235 to 239; sequence KFGKT. Position 238 (Lys238) interacts with ATP. Residues 357–414 enclose the S4 RNA-binding domain; the sequence is ADLMQALVDAELQPSRGQARKTIASNAVTINGEKQSDPEYIFNDEDRLFGRYTLLRRG.

It belongs to the class-I aminoacyl-tRNA synthetase family. TyrS type 1 subfamily. Homodimer.

It is found in the cytoplasm. It carries out the reaction tRNA(Tyr) + L-tyrosine + ATP = L-tyrosyl-tRNA(Tyr) + AMP + diphosphate + H(+). Catalyzes the attachment of tyrosine to tRNA(Tyr) in a two-step reaction: tyrosine is first activated by ATP to form Tyr-AMP and then transferred to the acceptor end of tRNA(Tyr). The polypeptide is Tyrosine--tRNA ligase (Salmonella agona (strain SL483)).